The chain runs to 144 residues: Augurin-B (144 aa).

Positions 1-18 (MSLHSLCVPTILLISVLS) are cleaved as a signal peptide. Positions 19 to 68 (ICLSSGGSSDSKLHRILIKRDAKEIESRPKAYISVQQSKAKEFLSGLHRT) are excised as a propeptide. Residues 109 to 144 (RSNDQGRQHHHDENAPMSQQDPRYNRHGANVNYDYY) are disordered. A compositionally biased stretch (basic and acidic residues) spans 112–122 (DQGRQHHHDEN).

Belongs to the augurin family.

Its subcellular location is the secreted. The protein localises to the cytoplasm. The protein resides in the apical cell membrane. In terms of biological role, probable hormone. Required for the proper formation of the central nervous system by attenuating cell proliferation during development. The protein is Augurin-B of Danio rerio (Zebrafish).